A 212-amino-acid polypeptide reads, in one-letter code: Thymidylate kinase (212 aa).

An ATP-binding site is contributed by 10 to 17 (GIDGCGKT).

The protein belongs to the thymidylate kinase family.

The catalysed reaction is dTMP + ATP = dTDP + ADP. Functionally, phosphorylation of dTMP to form dTDP in both de novo and salvage pathways of dTTP synthesis. The polypeptide is Thymidylate kinase (Synechococcus sp. (strain RCC307)).